We begin with the raw amino-acid sequence, 48 residues long: MKVVSSIGSLKNRSKDCQVVKRRGRLYVICKSDPRLKVRQGGAKMKRK.

It belongs to the bacterial ribosomal protein bL36 family.

Its subcellular location is the plastid. It localises to the chloroplast. In Rhodomonas salina (Cryptomonas salina), this protein is Large ribosomal subunit protein bL36c.